The following is a 287-amino-acid chain: 4-diphosphocytidyl-2-C-methyl-D-erythritol kinase (287 aa).

K14 is a catalytic residue. 98–108 serves as a coordination point for ATP; the sequence is PPGAGLGGGSS. Residue D140 is part of the active site.

The protein belongs to the GHMP kinase family. IspE subfamily.

It carries out the reaction 4-CDP-2-C-methyl-D-erythritol + ATP = 4-CDP-2-C-methyl-D-erythritol 2-phosphate + ADP + H(+). It functions in the pathway isoprenoid biosynthesis; isopentenyl diphosphate biosynthesis via DXP pathway; isopentenyl diphosphate from 1-deoxy-D-xylulose 5-phosphate: step 3/6. Catalyzes the phosphorylation of the position 2 hydroxy group of 4-diphosphocytidyl-2C-methyl-D-erythritol. This is 4-diphosphocytidyl-2-C-methyl-D-erythritol kinase from Methylacidiphilum infernorum (isolate V4) (Methylokorus infernorum (strain V4)).